Here is a 204-residue protein sequence, read N- to C-terminus: Neurensin-2 (204 aa).

A run of 2 helical transmembrane segments spans residues 66-86 (LSSG…GYAV) and 122-142 (LCVA…IGWL). The interval 178 to 204 (SGQSWFSPPASPFGQSSVQTIQPKRDS) is disordered. Residues 190–204 (FGQSSVQTIQPKRDS) show a composition bias toward polar residues.

The protein belongs to the VMP family.

It localises to the membrane. In terms of biological role, may play a role in maintenance and/or transport of vesicles. This Homo sapiens (Human) protein is Neurensin-2 (NRSN2).